Consider the following 502-residue polypeptide: Myocilin (502 aa).

An N-terminal signal peptide occupies residues 1–31; that stretch reads MPSCAYCCSCGPKMPALQLLFLACLVWGMGA. Positions 82 to 183 form a coiled coil; the sequence is ADLESTKARV…QEVARLRRGQ (102 aa). Residues 166–198 form a disordered region; sequence ARRLEGSSQEVARLRRGQCPSTHHPSQDMLPGS. Residue N229 is glycosylated (N-linked (GlcNAc...) asparagine). One can recognise an Olfactomedin-like domain in the interval 242 to 501; it reads GCGVLMWVGE…MVTYDIKLSE (260 aa). The cysteines at positions 243 and 431 are disulfide-linked. Residues D378, N426, A427, V475, and D476 each contribute to the Ca(2+) site.

Homodimer (via N-terminus). Can also form higher oligomers. Interacts with OLFM3, FN1, NRCAM, GLDN and NFASC. Interacts (via N-terminus) with MYL2. Interacts with SFRP1, FRZB, FZD7, FZD10, FZD1 and WIF1; regulates Wnt signaling. Interacts with SNTA1; regulates muscle hypertrophy. Interacts with ERBB2 and ERBB3; activates ERBB2-ERBB3 signaling pathway. Interacts with SNCG; affects its secretion and its aggregation. Post-translationally, palmitoylated. In terms of processing, undergoes a calcium-dependent proteolytic cleavage at Gln-225 by CAPN2 in the endoplasmic reticulum. The result is the production of two fragments, one of 35 kDa containing the C-terminal olfactomedin-like domain, and another of 20 kDa containing the N-terminal leucine zipper-like domain. Glycosylated. As to expression, highly expressed in skeletal muscle and retina. Also detected at lower levels in thyroid gland but not in other endocrine glands such as the adrenal or pituitary glands.

The protein localises to the secreted. The protein resides in the golgi apparatus. Its subcellular location is the cytoplasmic vesicle. It is found in the extracellular space. It localises to the extracellular matrix. The protein localises to the extracellular exosome. The protein resides in the mitochondrion. Its subcellular location is the mitochondrion intermembrane space. It is found in the mitochondrion inner membrane. It localises to the mitochondrion outer membrane. The protein localises to the rough endoplasmic reticulum. The protein resides in the cell projection. Its subcellular location is the cilium. It is found in the endoplasmic reticulum. In terms of biological role, secreted glycoprotein regulating the activation of different signaling pathways in adjacent cells to control different processes including cell adhesion, cell-matrix adhesion, cytoskeleton organization and cell migration. Promotes substrate adhesion, spreading and formation of focal contacts. Negatively regulates cell-matrix adhesion and stress fiber assembly through Rho protein signal transduction. Modulates the organization of actin cytoskeleton by stimulating the formation of stress fibers through interactions with components of Wnt signaling pathways. Promotes cell migration through activation of PTK2 and the downstream phosphatidylinositol 3-kinase signaling. Plays a role in bone formation and promotes osteoblast differentiation in a dose-dependent manner through mitogen-activated protein kinase signaling. Mediates myelination in the peripheral nervous system through ERBB2/ERBB3 signaling. Plays a role as a regulator of muscle hypertrophy through the components of dystrophin-associated protein complex. Involved in positive regulation of mitochondrial depolarization. Plays a role in neurite outgrowth. May participate in the obstruction of fluid outflow in the trabecular meshwork. The chain is Myocilin (Myoc) from Rattus norvegicus (Rat).